The primary structure comprises 217 residues: Probable GTP-binding protein EngB (217 aa).

The region spanning 32-205 (GTPQIAFAGR…RKIVYSLIET (174 aa)) is the EngB-type G domain. GTP contacts are provided by residues 40–47 (GRSNAGKS), 67–71 (GKTKL), 85–88 (DLPG), 152–155 (TKID), and 184–186 (VSN). Residues Ser-47 and Thr-69 each contribute to the Mg(2+) site.

The protein belongs to the TRAFAC class TrmE-Era-EngA-EngB-Septin-like GTPase superfamily. EngB GTPase family. Mg(2+) serves as cofactor.

Its function is as follows. Necessary for normal cell division and for the maintenance of normal septation. In Leptospira interrogans serogroup Icterohaemorrhagiae serovar copenhageni (strain Fiocruz L1-130), this protein is Probable GTP-binding protein EngB.